The primary structure comprises 695 residues: Interleukin-1 receptor accessory protein-like 1 (695 aa).

A signal peptide spans 1-24 (MKAPIPHLILLYATFTQSLKVVTK). The Ig-like C2-type 1 domain maps to 25–134 (RGSADGCTDW…YCMKVSISLT (110 aa)). Residues 25-357 (RGSADGCTDW…LLHKRELMYT (333 aa)) lie on the Extracellular side of the membrane. 2 disulfide bridges follow: C31-C126 and C53-C118. Residues N63, N122, and N138 are each glycosylated (N-linked (GlcNAc...) asparagine). 2 disulfides stabilise this stretch: C143–C185 and C164–C216. Ig-like C2-type domains lie at 143–232 (CYNS…TELT) and 242–350 (PKLL…VLLH). N213, N264, and N331 each carry an N-linked (GlcNAc...) asparagine glycan. The cysteines at positions 267 and 334 are disulfide-linked. The helical transmembrane segment at 358-378 (VELAGGLGAILLLLICSVTIY) threads the bilayer. Over 379 to 695 (KCYKIEIMLF…RETSISSVIW (317 aa)) the chain is Cytoplasmic. Residues 403–558 (KDYDAYLSYT…KFWKRLQYEM (156 aa)) enclose the TIR domain. The active site involves E490. The tract at residues 548 to 643 (SKFWKRLQYE…TGTLPLTSIG (96 aa)) is interaction with NCS1. Residues 657-679 (NGQRPQTKSNREPNPDEAHTNSA) are disordered. The span at 665-675 (SNREPNPDEAH) shows a compositional bias: basic and acidic residues.

Belongs to the interleukin-1 receptor family. As to quaternary structure, homodimer. Interacts (calcium-independent) with NCS1/FREQ. Interacts (via the first immunoglobilin domain) with PTPRD (via the second immunoglobilin domain); this interaction is PTPRD-splicing-dependent and induces pre- and post-synaptic differentiation of neurons and is required for IL1RAPL1-mediated synapse formation. In terms of tissue distribution, detected in total brain extracts, olfactory bulb, hippocampus and striatum (at protein level).

The protein resides in the cell membrane. It is found in the cytoplasm. Its subcellular location is the cell projection. It localises to the axon. The protein localises to the dendrite. It carries out the reaction NAD(+) + H2O = ADP-D-ribose + nicotinamide + H(+). May regulate secretion and presynaptic differentiation through inhibition of the activity of N-type voltage-gated calcium channel. May activate the MAP kinase JNK. Plays a role in neurite outgrowth. During dendritic spine formation can bidirectionally induce pre- and post-synaptic differentiation of neurons by trans-synaptically binding to PTPRD. This Mus musculus (Mouse) protein is Interleukin-1 receptor accessory protein-like 1 (Il1rapl1).